The primary structure comprises 306 residues: Non-specific ribonucleoside hydrolase RihC (306 aa).

His235 is an active-site residue.

Belongs to the IUNH family. RihC subfamily.

Hydrolyzes both purine and pyrimidine ribonucleosides with a broad-substrate specificity. The sequence is that of Non-specific ribonucleoside hydrolase RihC from Salmonella paratyphi C (strain RKS4594).